We begin with the raw amino-acid sequence, 1513 residues long: Protein tincar (1513 aa).

Topologically, residues Met1–Ser77 are cytoplasmic. A helical transmembrane segment spans residues Leu78–Gly98. The Extracellular portion of the chain corresponds to Ala99 to Leu120. A helical membrane pass occupies residues Gln121–Phe141. Residues Lys142–Ala181 lie on the Cytoplasmic side of the membrane. Residues Leu182–Leu202 form a helical membrane-spanning segment. The Extracellular segment spans residues Leu203–Ala668. Disordered stretches follow at residues Thr247–Gly266, Glu354–Val373, and Met383–Arg532. Low complexity predominate over residues Ala427 to Thr466. Over residues Ser478 to Val507 the composition is skewed to basic residues. Basic and acidic residues predominate over residues Thr523–Arg532. Residues Glu669–Trp689 form a helical membrane-spanning segment. The Cytoplasmic portion of the chain corresponds to Asn690–Ala696. The chain crosses the membrane as a helical span at residues Cys697–Ile717. Residues Ser718–Gly736 lie on the Extracellular side of the membrane. Residues Leu737 to Ala757 form a helical membrane-spanning segment. Residues Ser758–Thr787 are Cytoplasmic-facing. Residues Trp788–Ala808 form a helical membrane-spanning segment. Residues Pro809–Thr826 lie on the Extracellular side of the membrane. A helical transmembrane segment spans residues Phe827–Leu847. Over Thr848–His1513 the chain is Cytoplasmic. Composition is skewed to low complexity over residues Ser879–Gly903 and Gln1060–Gln1071. Disordered stretches follow at residues Ser879–Ala913, Glu1045–Gly1090, Ala1115–Gly1155, Glu1173–His1214, and Ala1231–Ala1335. A compositionally biased stretch (pro residues) spans Pro1122–Val1149. 2 stretches are compositionally biased toward low complexity: residues Leu1179–Gln1208 and Thr1255–His1285. Positions Ser1286–Ile1296 are enriched in basic and acidic residues. Pro residues predominate over residues Lys1303–Gln1314. The span at Met1324–Ala1335 shows a compositional bias: polar residues.

As to expression, expression varies in tissues throughout development. At stage 5, expressed in the embryo dorsal region followed by expression in a striped pattern at stage 6. During gastrulation, expressed in ventral region and ventral nerve cord. Also detected in many neurons in the externa sensilla and chordotonal organ. At stage 16, expressed on the surface of the midgut. Additionally, expressed in a subset of cardioblasts (Tin+ subpopulation) during dorsal vessel formation. In third-instar larval tissues, expressed in the eye and antennal disks. In the antennal disks, expressed in the second antennal segments. In the eye disks, strongest expression found in the ocelli, and in the differentiating ommatidial cells. Also expressed in all cells within and in the vicinity of the morphogenetic furrow.

Its subcellular location is the membrane. Involved in eye morphogenesis. May be essential for the normal differentiation of ommatidial cells. The polypeptide is Protein tincar (tinc) (Drosophila melanogaster (Fruit fly)).